The chain runs to 664 residues: UvrABC system protein B (664 aa).

Positions N25–E170 constitute a Helicase ATP-binding domain. G38–T45 serves as a coordination point for ATP. Residues Y91–I114 carry the Beta-hairpin motif. Positions Q429 to L595 constitute a Helicase C-terminal domain. Residues K622 to K657 form the UVR domain.

It belongs to the UvrB family. Forms a heterotetramer with UvrA during the search for lesions. Interacts with UvrC in an incision complex.

The protein localises to the cytoplasm. Its function is as follows. The UvrABC repair system catalyzes the recognition and processing of DNA lesions. A damage recognition complex composed of 2 UvrA and 2 UvrB subunits scans DNA for abnormalities. Upon binding of the UvrA(2)B(2) complex to a putative damaged site, the DNA wraps around one UvrB monomer. DNA wrap is dependent on ATP binding by UvrB and probably causes local melting of the DNA helix, facilitating insertion of UvrB beta-hairpin between the DNA strands. Then UvrB probes one DNA strand for the presence of a lesion. If a lesion is found the UvrA subunits dissociate and the UvrB-DNA preincision complex is formed. This complex is subsequently bound by UvrC and the second UvrB is released. If no lesion is found, the DNA wraps around the other UvrB subunit that will check the other stand for damage. This Borreliella afzelii (strain PKo) (Borrelia afzelii) protein is UvrABC system protein B.